Consider the following 101-residue polypeptide: Biogenesis of lysosome-related organelles complex 1 subunit BLS1 (101 aa).

The protein belongs to the BLOC1S1 family. In terms of assembly, component of the biogenesis of lysosome-related organelles complex-1 (BLOC-1).

It is found in the endosome. Functionally, component of the biogenesis of lysosome-related organelles complex-1 (BLOC-1), a complex involved in endosomal cargo sorting. The polypeptide is Biogenesis of lysosome-related organelles complex 1 subunit BLS1 (BLS1) (Zygosaccharomyces rouxii (strain ATCC 2623 / CBS 732 / NBRC 1130 / NCYC 568 / NRRL Y-229)).